The chain runs to 507 residues: MELSPRAAELTNLFESRIRNFYANFQVDEIGRVVSVGDGIAQVYGLNEIQAGEMVLFANGVKGMALNLENENVGIVVFGGDTAIKEGDLVKRTGSIVDVPAGKAMLGRVVDAMGVPIDGRGALSDHEQRRVEVKAPGILERKSVHEPMQTGLKAVDSLVPIGRGQRELLIGDRQTGKTTIAIDTILNQKQINSRATSESETMYCVYVAIGQKRSTVGQLIQTLEEANALEYSILVAATASDPAPLQFLAPYSGCAMGEYFRDNGMHALIIYDDLSKQAVAYRQMSLLLRRPPGREAFPGDVFYLHSRLLERAAKRSDQTGAGSLTALPVIETQAGDVSAYIPTNVISITDGQICLETELFYRGIRPAINVGLSVSRVGSAAQLKAMKQVCGSSKLELAQYREVAAFAQFGSDLDAATQALLNRGARLTEVPKQPQYAPLPIEKQILVIYAAVNGFCDRMPLDRISQYEKAIPNSVKPELLQALKGGLTNERKMEPDAFLKERALRLI.

171–178 (GDRQTGKT) lines the ATP pocket.

It belongs to the ATPase alpha/beta chains family. As to quaternary structure, F-type ATPases have 2 components, CF(1) - the catalytic core - and CF(0) - the membrane proton channel. CF(1) has five subunits: alpha(3), beta(3), gamma(1), delta(1), epsilon(1). CF(0) has three main subunits: a, b and c.

It is found in the mitochondrion. It localises to the mitochondrion inner membrane. Mitochondrial membrane ATP synthase (F(1)F(0) ATP synthase or Complex V) produces ATP from ADP in the presence of a proton gradient across the membrane which is generated by electron transport complexes of the respiratory chain. F-type ATPases consist of two structural domains, F(1) - containing the extramembraneous catalytic core, and F(0) - containing the membrane proton channel, linked together by a central stalk and a peripheral stalk. During catalysis, ATP synthesis in the catalytic domain of F(1) is coupled via a rotary mechanism of the central stalk subunits to proton translocation. Subunits alpha and beta form the catalytic core in F(1). Rotation of the central stalk against the surrounding alpha(3)beta(3) subunits leads to hydrolysis of ATP in three separate catalytic sites on the beta subunits. Subunit alpha does not bear the catalytic high-affinity ATP-binding sites. The polypeptide is ATP synthase subunit alpha, mitochondrial (ATPA) (Brassica napus (Rape)).